A 194-amino-acid polypeptide reads, in one-letter code: dTTP/UTP pyrophosphatase (194 aa).

The active-site Proton acceptor is the Asp-73.

Belongs to the Maf family. YhdE subfamily. The cofactor is a divalent metal cation.

It is found in the cytoplasm. The enzyme catalyses dTTP + H2O = dTMP + diphosphate + H(+). The catalysed reaction is UTP + H2O = UMP + diphosphate + H(+). Functionally, nucleoside triphosphate pyrophosphatase that hydrolyzes dTTP and UTP. May have a dual role in cell division arrest and in preventing the incorporation of modified nucleotides into cellular nucleic acids. The protein is dTTP/UTP pyrophosphatase of Clostridium botulinum (strain Okra / Type B1).